The primary structure comprises 312 residues: UDP-N-acetylenolpyruvoylglucosamine reductase (312 aa).

The region spanning 33 to 199 (RVGGKAEWYC…TGATLQLLPG (167 aa)) is the FAD-binding PCMH-type domain. Arg-178 is a catalytic residue. Ser-229 functions as the Proton donor in the catalytic mechanism. Glu-299 is an active-site residue.

Belongs to the MurB family. The cofactor is FAD.

The protein localises to the cytoplasm. The enzyme catalyses UDP-N-acetyl-alpha-D-muramate + NADP(+) = UDP-N-acetyl-3-O-(1-carboxyvinyl)-alpha-D-glucosamine + NADPH + H(+). It participates in cell wall biogenesis; peptidoglycan biosynthesis. In terms of biological role, cell wall formation. This is UDP-N-acetylenolpyruvoylglucosamine reductase from Synechococcus sp. (strain JA-3-3Ab) (Cyanobacteria bacterium Yellowstone A-Prime).